The sequence spans 283 residues: MLIHPQFDPVAIHLGPLAVHWYGLMYLLGFALFLTMGKYRLKNGNDVLTVPQLDDMLMYGAVGVVVGGRLGEVLFYQPGYYFSHPLEIFMVWKGGMSFHGGFLGVLIAVAIYGRKVGRGFWQLTDFVAPLVPLGLAAGRVGNFINGELWGRVASPELPWAMLFPQARMEDIAEAQQSADLMNMLMQYGGLLRHPSQLYEFALEGIVLFGALWIYSAKPRATGKVSALFLIGYGLARFVSEYFRNPDAGIFGKSDVISMGQWLSLPMIVIGVALLVFFGRRKQG.

3 helical membrane-spanning segments follow: residues Leu14–Leu34, Met56–Tyr76, and Ile88–Ala108. Position 139 (Arg139) interacts with a 1,2-diacyl-sn-glycero-3-phospho-(1'-sn-glycerol). The helical transmembrane segment at Met258–Gly278 threads the bilayer.

This sequence belongs to the Lgt family.

It localises to the cell inner membrane. It carries out the reaction L-cysteinyl-[prolipoprotein] + a 1,2-diacyl-sn-glycero-3-phospho-(1'-sn-glycerol) = an S-1,2-diacyl-sn-glyceryl-L-cysteinyl-[prolipoprotein] + sn-glycerol 1-phosphate + H(+). It functions in the pathway protein modification; lipoprotein biosynthesis (diacylglyceryl transfer). Its function is as follows. Catalyzes the transfer of the diacylglyceryl group from phosphatidylglycerol to the sulfhydryl group of the N-terminal cysteine of a prolipoprotein, the first step in the formation of mature lipoproteins. This Chromobacterium violaceum (strain ATCC 12472 / DSM 30191 / JCM 1249 / CCUG 213 / NBRC 12614 / NCIMB 9131 / NCTC 9757 / MK) protein is Phosphatidylglycerol--prolipoprotein diacylglyceryl transferase.